Consider the following 460-residue polypeptide: uncharacterized protein (460 aa).

This is an uncharacterized protein from Haemophilus influenzae (strain ATCC 51907 / DSM 11121 / KW20 / Rd).